The following is a 1055-amino-acid chain: MQETFKFLRCNSQGEAVEDKYSLETLKNHFVVRDEYNNLFRVFSNRDDFWEWEAAQPFEQKCFHEVVFGFLPQRLKFDIDFPVNKSYSDDNDNVNDDDSVYDDDNVYDILDMIINVIMDVFYETYSLPYNINLTREQILLTDSIGLNKKRELKYSFHIILYTYSVLNNNEAKAFTSKVLENLPKHVYPFVDPQVNKSIQNFRIIGSHKKGSMRVKMFNEELAEVFETSTTTKKSDTLIATPFETTCLPCIFTNVKETTPSSCDTIQQSELEEVLKFAGTLCKNHCFLRVHKNLVLFKRTSPSYCEICKRMHDKDNTLILRVTGNKVYQHCRHDNKHSLLMGSLSGTTNFVETYVDQVMTKSIEVHESILFEELPDTQKHIYDESSMREYERVPTLVVKAQMKIGKTVQLRNYLQKYYGNNSISKQQTIRFVTFRQIFSKNIQSRLPNFTLYSEVTGDLDSYERVIVQVESLFRLTSTAEPVDLLILDEVESIFNQFNSGLHKYFAPSFAIFMWMLETANYVICLDANLGNRTYNILQRFRGDVPIFFHWNQYKRAQHDTYYFTSSRETWLNNLLKDLLEDKKIVIPTNSLMEARLLQSFIQKKFPEKKIGFYSSKSTAHERESHFNNVSYYWGLVDILIYTPTISAGVSYEDKRFDVLYGFFNNMSCDVETCCQMLGRVRELKSKCYKICLQGKQNYYPETIEDIEMFTLQKRDTLFQTINNHQLSFTYSKETGRPVYYKTPYYHLWLETMRIQHLSKNHFITRFINQVADTGAKVFILTGEKLETVKQYTSIKMEIKHQDYVNIASAETIDANKALQIKQNLKEGITVDQQDLFAYEKYKLLEFYAWHGHKITPKFVEQYNSFMTKQNYTGRVQISRGKTVYESLTMLQTQELNFHQWAMQHAEHHDLQFNYSFQSHMYAIMLLTKCGFKCVQDPNILTNEQLMTKLVDEFVQYDLSAVSFEFKLKKPSKTDPQTILKFINKVLGLRYGLKIHHNKGNYYIKNTKAGSLIPFVRQQIKQSPCVVSNLLPITETSSVKEETLTETSPIKETFTET.

Belongs to the asfivirus F1055L family.

Its function is as follows. May be involved in DNA replication. This is Putative helicase/primase complex protein from Ornithodoros (relapsing fever ticks).